Here is a 716-residue protein sequence, read N- to C-terminus: tRNA(Met) cytidine acetyltransferase TmcA (716 aa).

ATP is bound by residues Gln192, 217 to 226, and Arg364; that span reads GRGKSYVIGL. Residues 401–567 enclose the N-acetyltransferase domain; sequence REVLARDREV…KNVALAKPLD (167 aa). Acetyl-CoA contacts are provided by residues 493–495 and 500–506; these read IAV and QRRGLGS.

Belongs to the RNA cytidine acetyltransferase family. TmcA subfamily.

Its subcellular location is the cytoplasm. It catalyses the reaction cytidine(34) in elongator tRNA(Met) + acetyl-CoA + ATP + H2O = N(4)-acetylcytidine(34) in elongator tRNA(Met) + ADP + phosphate + CoA + H(+). In terms of biological role, catalyzes the formation of N(4)-acetylcytidine (ac(4)C) at the wobble position of tRNA(Met), by using acetyl-CoA as an acetyl donor and ATP (or GTP). The sequence is that of tRNA(Met) cytidine acetyltransferase TmcA from Aeropyrum pernix (strain ATCC 700893 / DSM 11879 / JCM 9820 / NBRC 100138 / K1).